The primary structure comprises 224 residues: Methylamine utilization ferredoxin-type protein MauM (224 aa).

An N-terminal signal peptide occupies residues 1–41 (MEARMTGRRKVTRRDAMADAARAVGVACLGGFSLAALVRTA). 4 consecutive 4Fe-4S ferredoxin-type domains span residues 54-84 (ALPE…LAEW), 91-124 (GTPF…RDIP), 133-169 (VAVL…LEPQ), and 177-208 (MIPV…VLPR). Cysteine 64, cysteine 67, cysteine 70, cysteine 74, cysteine 102, cysteine 105, cysteine 110, cysteine 114, cysteine 142, cysteine 150, cysteine 153, cysteine 157, cysteine 186, cysteine 189, cysteine 192, and cysteine 196 together coordinate [4Fe-4S] cluster.

It functions in the pathway one-carbon metabolism; methylamine degradation. In terms of biological role, involved in electron transfer. This Paracoccus denitrificans (strain Pd 1222) protein is Methylamine utilization ferredoxin-type protein MauM (mauM).